We begin with the raw amino-acid sequence, 259 residues long: DNA adenine methylase (259 aa).

Residues Tyr7, Lys11, Asp50, and Asp171 each contribute to the S-adenosyl-L-methionine site.

Belongs to the N(4)/N(6)-methyltransferase family. In terms of assembly, monomer.

The enzyme catalyses a 2'-deoxyadenosine in DNA + S-adenosyl-L-methionine = an N(6)-methyl-2'-deoxyadenosine in DNA + S-adenosyl-L-homocysteine + H(+). In terms of biological role, an alpha subtpe methyltransferase that recognizes the double-stranded sequence 5'-GATC-3' and methylates A-2 on both strands. May prevent degradation of viral DNA by the host restriction-modification antiviral defense system. The polypeptide is DNA adenine methylase (Enterobacteria phage T2 (Bacteriophage T2)).